The chain runs to 587 residues: Probable terpene synthase 12 (587 aa).

Aspartate 338, aspartate 342, and glutamate 489 together coordinate Mg(2+). Positions 338–342 (DDVYD) match the DDXXD motif motif.

This sequence belongs to the terpene synthase family. Mg(2+) serves as cofactor.

Its function is as follows. Probable sesquiterpene synthase. This chain is Probable terpene synthase 12 (TPS12), found in Ricinus communis (Castor bean).